Reading from the N-terminus, the 519-residue chain is Cytochrome P450 52A10 (519 aa).

Cys-466 is a heme binding site.

This sequence belongs to the cytochrome P450 family. It depends on heme as a cofactor.

The protein localises to the membrane. Its function is as follows. Together with an NADPH cytochrome P450 the enzyme system catalyzes the terminal hydroxylation as the first step in the assimilation of alkanes and fatty acids. The chain is Cytochrome P450 52A10 (CYP52A10) from Candida maltosa (Yeast).